Consider the following 890-residue polypeptide: Alanine--tRNA ligase (890 aa).

Zn(2+)-binding residues include His-573, His-577, Cys-676, and His-680.

It belongs to the class-II aminoacyl-tRNA synthetase family. The cofactor is Zn(2+).

Its subcellular location is the cytoplasm. The enzyme catalyses tRNA(Ala) + L-alanine + ATP = L-alanyl-tRNA(Ala) + AMP + diphosphate. In terms of biological role, catalyzes the attachment of alanine to tRNA(Ala) in a two-step reaction: alanine is first activated by ATP to form Ala-AMP and then transferred to the acceptor end of tRNA(Ala). Also edits incorrectly charged Ser-tRNA(Ala) and Gly-tRNA(Ala) via its editing domain. The sequence is that of Alanine--tRNA ligase from Corynebacterium efficiens (strain DSM 44549 / YS-314 / AJ 12310 / JCM 11189 / NBRC 100395).